Consider the following 167-residue polypeptide: Iron-sulfur cluster assembly enzyme ISCU (167 aa).

Residues 1 to 34 (MAAAGAFRLRRAASALLLRSPRLPARELSAPARL) constitute a mitochondrion transit peptide. Ser14 is subject to Phosphoserine; by MTOR. Pro46 is a Zn(2+) binding site. Residue Cys69 is the Cysteine persulfide intermediate of the active site. Cys69 carries the post-translational modification Cysteine persulfide. Positions 70, 71, 95, 112, and 138 each coordinate Zn(2+). Cys138 functions as the Cysteine persulfide intermediate in the catalytic mechanism. Cys138 carries the post-translational modification Cysteine persulfide.

The protein belongs to the NifU family. As to quaternary structure, homodimer; Tyr-35-mediated dimerization of two iron- and sulfide-containing ISCU subunit bind to the cysteine desulfurase complex. Component of the mitochondrial core iron-sulfur cluster (ISC) complex composed of NFS1, LYRM4, NDUFAB1, ISCU, FXN, and FDX2; this complex is an heterohexamer containing two copies of each monomer. Interacts (D-state) with NFS1 (homodimer form); each monomer interacts with the C-terminal regions of each NFS1 monomer. Interacts (monomer form) with FXN (via ferrous form); the interaction is possible when both are bound to the dimeric form of the cysteine desulfurase complex (NFS1:LYRM4) and enhances FXN interaction to the dimeric form of the cysteine desulfurase complex (NFS1:LYRM4). Interacts with GLRX5. Interacts (D-state) with HSPA9. Interacts (S-state) with HSCB; this interaction stimulates the ATPase activity of HSPA9. In terms of assembly, component of the cytoplasmic core iron-sulfur cluster (ISC) complex composed at least of NFS1, LYRM4, and ISCU; this complex interacts with FXN. Monomer; each monomer binds to the C-terminal regions of NFS1 (cytoplasmic and homodimer form). Interacts with NFS1 (cytoplasmic and homodimer form); this interaction promotes de novo iron-sulfur cluster formation. Interacts with HSCB (cytoplasmic form); this interaction stabilizes the (Fe-S) clusters on ISCU. In terms of processing, phosphorylation at Ser-14 is required for ISCU protein stabilization in the cytosol, whereas dephosphorylation of Ser-14, due to the inhibition of mTORC1 (mammalian target of rapamycin complex 1) complex, leads to degradation of the precursor form and ultimately to a decrease in the mitochondrial mature form. Post-translationally, cysteine persulfide is reduced by thiol-containing molecules such as glutathione and L-cysteine. As to expression, detected in heart, liver, skeletal muscle, brain, pancreas, kidney, lung and placenta.

The protein resides in the mitochondrion. It is found in the cytoplasm. Its subcellular location is the nucleus. Its function is as follows. Mitochondrial scaffold protein, of the core iron-sulfur cluster (ISC) assembly complex, that provides the structural architecture on which the [2Fe-2S] clusters are assembled. The core iron-sulfur cluster (ISC) assembly complex is involved in the de novo synthesis of a [2Fe-2S] cluster, the first step of the mitochondrial iron-sulfur protein biogenesis. This process is initiated by the cysteine desulfurase complex (NFS1:LYRM4:NDUFAB1) that produces persulfide which is delivered on the scaffold protein ISCU in a FXN-dependent manner. Then this complex is stabilized by FDX2 which provides reducing equivalents to accomplish the [2Fe-2S] cluster assembly. Finally, the [2Fe-2S] cluster is transferred from ISCU to chaperone proteins, including HSCB, HSPA9 and GLRX5. Exists as two slow interchanging conformational states, a structured (S) and disordered (D) form. May modulate NFS1 desulfurase activity in a zinc-dependent manner. Modulates the interaction between FXN and the cysteine desulfurase complex. Cytoplasmic scaffold protein, of the cytoplasmic core iron-sulfur cluster (ISC) assembly complex that provides the structural architecture on which the Fe-S clusters are assembled and may be involved in the cytoplasmic iron-sulfur protein biogenesis. This Homo sapiens (Human) protein is Iron-sulfur cluster assembly enzyme ISCU.